A 218-amino-acid chain; its full sequence is Pyridoxine/pyridoxamine 5'-phosphate oxidase (218 aa).

FMN contacts are provided by residues 66–71 (RVVLLK), Arg-87, Lys-88, and Gln-110. Residue Lys-71 participates in substrate binding. Residues Tyr-128, Arg-132, and Ser-136 each contribute to the substrate site. FMN contacts are provided by residues 145–146 (QS) and Trp-190. 196–198 (RLH) provides a ligand contact to substrate. Arg-200 serves as a coordination point for FMN.

This sequence belongs to the pyridoxamine 5'-phosphate oxidase family. Homodimer. FMN is required as a cofactor.

It catalyses the reaction pyridoxamine 5'-phosphate + O2 + H2O = pyridoxal 5'-phosphate + H2O2 + NH4(+). The enzyme catalyses pyridoxine 5'-phosphate + O2 = pyridoxal 5'-phosphate + H2O2. It functions in the pathway cofactor metabolism; pyridoxal 5'-phosphate salvage; pyridoxal 5'-phosphate from pyridoxamine 5'-phosphate: step 1/1. The protein operates within cofactor metabolism; pyridoxal 5'-phosphate salvage; pyridoxal 5'-phosphate from pyridoxine 5'-phosphate: step 1/1. Catalyzes the oxidation of either pyridoxine 5'-phosphate (PNP) or pyridoxamine 5'-phosphate (PMP) into pyridoxal 5'-phosphate (PLP). This chain is Pyridoxine/pyridoxamine 5'-phosphate oxidase, found in Anaplasma marginale (strain St. Maries).